The following is a 331-amino-acid chain: UPF0329 protein ECU01_0080/ECU01_1530/ECU02_1560/ECU04_0090/ECU08_0010/ECU08_2090 (331 aa).

Residues 305–320 (QRSEMEKRDREQDPER) are compositionally biased toward basic and acidic residues. The disordered stretch occupies residues 305-331 (QRSEMEKRDREQDPERRRLRARRVGSL). Basic residues predominate over residues 321 to 331 (RRLRARRVGSL).

The protein belongs to the UPF0329 family.

This is UPF0329 protein ECU01_0080/ECU01_1530/ECU02_1560/ECU04_0090/ECU08_0010/ECU08_2090 from Encephalitozoon cuniculi (strain GB-M1) (Microsporidian parasite).